We begin with the raw amino-acid sequence, 279 residues long: Release factor glutamine methyltransferase (279 aa).

Residues E141 and N187 each contribute to the S-adenosyl-L-methionine site. Position 187–190 (187–190 (NPPY)) interacts with substrate.

Belongs to the protein N5-glutamine methyltransferase family. PrmC subfamily.

It carries out the reaction L-glutaminyl-[peptide chain release factor] + S-adenosyl-L-methionine = N(5)-methyl-L-glutaminyl-[peptide chain release factor] + S-adenosyl-L-homocysteine + H(+). Functionally, methylates the class 1 translation termination release factors RF1/PrfA and RF2/PrfB on the glutamine residue of the universally conserved GGQ motif. This Corynebacterium glutamicum (strain ATCC 13032 / DSM 20300 / JCM 1318 / BCRC 11384 / CCUG 27702 / LMG 3730 / NBRC 12168 / NCIMB 10025 / NRRL B-2784 / 534) protein is Release factor glutamine methyltransferase.